A 428-amino-acid chain; its full sequence is 26S proteasome regulatory subunit 7 (428 aa).

211-218 (GPPGTGKT) serves as a coordination point for ATP.

Belongs to the AAA ATPase family.

It is found in the cytoplasm. The protein resides in the nucleus. Functionally, the 26S proteasome is involved in the ATP-dependent degradation of ubiquitinated proteins. The regulatory (or ATPase) complex confers ATP dependency and substrate specificity to the 26S complex. The polypeptide is 26S proteasome regulatory subunit 7 (psmC2) (Dictyostelium discoideum (Social amoeba)).